Reading from the N-terminus, the 1247-residue chain is Clustered mitochondria protein homolog (1247 aa).

Positions 1-43 are disordered; it reads MTLGSETKTDVEVPIINGKHEIPQEENDSGHSSINTPDSSEPD. Residues 30 to 39 show a composition bias toward polar residues; the sequence is GHSSINTPDS. The region spanning 329–579 is the Clu domain; it reads SDSLRAIELT…RSMPPDVHYL (251 aa). The tract at residues 1222–1247 is disordered; sequence GKQQNGTTEESKTTDVAAQLDNETLD.

This sequence belongs to the CLU family.

It localises to the cytoplasm. In terms of biological role, mRNA-binding protein involved in proper cytoplasmic distribution of mitochondria. This is Clustered mitochondria protein homolog from Caenorhabditis elegans.